Reading from the N-terminus, the 1344-residue chain is Xanthine dehydrogenase (1344 aa).

Residues 9 to 96 (SVLVFFVNGK…GCAVTTVEGI (88 aa)) enclose the 2Fe-2S ferredoxin-type domain. [2Fe-2S] cluster is bound by residues cysteine 48, cysteine 53, cysteine 56, cysteine 78, cysteine 118, cysteine 121, cysteine 153, and cysteine 155. The FAD-binding PCMH-type domain occupies 236–425 (FSSERVTWYR…LGIHFQKTTP (190 aa)). FAD contacts are provided by residues 264 to 271 (LVVGNTEV), phenylalanine 344, 354 to 358 (CLGGN), aspartate 367, leucine 415, and lysine 433. Mo-molybdopterin-binding residues include glutamine 781 and phenylalanine 812. Substrate is bound by residues glutamate 816 and arginine 894. Arginine 926 is a binding site for Mo-molybdopterin. Phenylalanine 928 provides a ligand contact to substrate. Alanine 1093 provides a ligand contact to Mo-molybdopterin. The active-site Proton acceptor is the glutamate 1276.

It belongs to the xanthine dehydrogenase family. As to quaternary structure, homodimer. It depends on FAD as a cofactor. The cofactor is Mo-molybdopterin. [2Fe-2S] cluster is required as a cofactor.

The protein localises to the peroxisome. It catalyses the reaction xanthine + NAD(+) + H2O = urate + NADH + H(+). The enzyme catalyses hypoxanthine + NAD(+) + H2O = xanthine + NADH + H(+). Key enzyme in purine degradation. Catalyzes the oxidation of hypoxanthine to xanthine. Catalyzes the oxidation of xanthine to uric acid. The sequence is that of Xanthine dehydrogenase (Xdh) from Drosophila subobscura (Fruit fly).